A 264-amino-acid polypeptide reads, in one-letter code: Thymidylate synthase (264 aa).

Arg-21 provides a ligand contact to dUMP. (6R)-5,10-methylene-5,6,7,8-tetrahydrofolate is bound at residue His-51. Residue 126–127 coordinates dUMP; that stretch reads RR. Cys-146 (nucleophile) is an active-site residue. Residues 166 to 169, Asn-177, and 207 to 209 each bind dUMP; these read RSCD and HLY. Position 169 (Asp-169) interacts with (6R)-5,10-methylene-5,6,7,8-tetrahydrofolate. Ala-263 lines the (6R)-5,10-methylene-5,6,7,8-tetrahydrofolate pocket.

It belongs to the thymidylate synthase family. Bacterial-type ThyA subfamily. Homodimer.

It localises to the cytoplasm. It catalyses the reaction dUMP + (6R)-5,10-methylene-5,6,7,8-tetrahydrofolate = 7,8-dihydrofolate + dTMP. Its pathway is pyrimidine metabolism; dTTP biosynthesis. Functionally, catalyzes the reductive methylation of 2'-deoxyuridine-5'-monophosphate (dUMP) to 2'-deoxythymidine-5'-monophosphate (dTMP) while utilizing 5,10-methylenetetrahydrofolate (mTHF) as the methyl donor and reductant in the reaction, yielding dihydrofolate (DHF) as a by-product. This enzymatic reaction provides an intracellular de novo source of dTMP, an essential precursor for DNA biosynthesis. The polypeptide is Thymidylate synthase (Klebsiella pneumoniae subsp. pneumoniae (strain ATCC 700721 / MGH 78578)).